Consider the following 244-residue polypeptide: Venom nerve growth factor 2 (244 aa).

An N-terminal signal peptide occupies residues 1-18; the sequence is MSMLCYTLIIAFLIGIWA. A propeptide spanning residues 19-125 is cleaved from the precursor; that stretch reads APKSEDNVPL…TLNRNIRAKR (107 aa). A compositionally biased stretch (basic and acidic residues) spans 47-66; sequence GLKTSRNTDQRHPAPKKAED. The disordered stretch occupies residues 47–69; it reads GLKTSRNTDQRHPAPKKAEDQEL. 2 disulfide bridges follow: Cys-139–Cys-205 and Cys-181–Cys-233.

It belongs to the NGF-beta family. Homodimer; non-covalently linked. As to expression, expressed by the venom gland.

The protein localises to the secreted. In terms of biological role, nerve growth factor is important for the development and maintenance of the sympathetic and sensory nervous systems. It stimulates division and differentiation of sympathetic and embryonic sensory neurons as well as basal forebrain cholinergic neurons in the brain. Its relevance in the snake venom is not clear. However, it has been shown to inhibit metalloproteinase-dependent proteolysis of platelet glycoprotein Ib alpha, suggesting a metalloproteinase inhibition to prevent metalloprotease autodigestion and/or protection against prey proteases. Binds a lipid between the two protein chains in the homodimer. The lipid-bound form promotes histamine relase from mouse mast cells, contrary to the lipid-free form. This is Venom nerve growth factor 2 from Notechis scutatus scutatus (Mainland tiger snake).